Here is a 180-residue protein sequence, read N- to C-terminus: ATP synthase subunit b 2 (180 aa).

The chain crosses the membrane as a helical span at residues 33–53 (IFWLLVTLVAIYFLLTRVALP).

This sequence belongs to the ATPase B chain family. F-type ATPases have 2 components, F(1) - the catalytic core - and F(0) - the membrane proton channel. F(1) has five subunits: alpha(3), beta(3), gamma(1), delta(1), epsilon(1). F(0) has three main subunits: a(1), b(2) and c(10-14). The alpha and beta chains form an alternating ring which encloses part of the gamma chain. F(1) is attached to F(0) by a central stalk formed by the gamma and epsilon chains, while a peripheral stalk is formed by the delta and b chains.

It is found in the cell inner membrane. Functionally, f(1)F(0) ATP synthase produces ATP from ADP in the presence of a proton or sodium gradient. F-type ATPases consist of two structural domains, F(1) containing the extramembraneous catalytic core and F(0) containing the membrane proton channel, linked together by a central stalk and a peripheral stalk. During catalysis, ATP synthesis in the catalytic domain of F(1) is coupled via a rotary mechanism of the central stalk subunits to proton translocation. Its function is as follows. Component of the F(0) channel, it forms part of the peripheral stalk, linking F(1) to F(0). The b'-subunit is a diverged and duplicated form of b found in plants and photosynthetic bacteria. This chain is ATP synthase subunit b 2 (atpF2), found in Cereibacter sphaeroides (strain ATCC 17025 / ATH 2.4.3) (Rhodobacter sphaeroides).